Consider the following 488-residue polypeptide: Surface lipoprotein assembly modifier 1 (488 aa).

An N-terminal signal peptide occupies residues 1 to 31; it reads MVIFYFCGKTFMPARNRWMLLLPLLASAAYA. Residues 32-202 are N-terminal domain; that stretch reads EETPREPDLR…LYRKALRERD (171 aa). TPR repeat units follow at residues 118–151 and 171–204; these read MLAL…QPDA and AADQ…RDAW. The interval 203–488 is C-terminal probable beta barrel, partially restores export of lipoproteins; it reads AWKVNGGFSV…RAFVEFNKTF (286 aa). 14 beta stranded membrane-spanning segments follow: residues 204-214, 241-252, 257-267, 280-291, 294-304, 316-325, 330-340, 354-364, 368-377, 393-402, 407-417, 439-448, 455-464, and 478-488; these read WKVNGGFSVTR, VNYRLGAEKKWS, WYTTAGGDVSG, TAGVSGGIGFAD, KDAGLAVFHER, NGARLYFNRW, WQTLSSAEWGR, LQISNSLVFYR, QYWMGGLDFY, GLRFAWGQEW, LSSLLRLGAAK, LNTSLSLWHR, ITPRLTLSHR, and NRAFVEFNKTF.

This sequence belongs to the Slam family. In terms of assembly, interacts with the C-terminal domain of surface lipoprotein TbpB.

Its subcellular location is the cell outer membrane. Functionally, required for correct export to the cell surface of some cell outer membrane lipoproteins both in Neisseria and heterologously in E.coli. In Neisseria meningitidis serogroup B (strain ATCC BAA-335 / MC58), this protein is Surface lipoprotein assembly modifier 1.